The following is a 330-amino-acid chain: Peroxidase 70 (330 aa).

The N-terminal stretch at 1–24 (MRSFTNLNPCYVLLPFFLVLATNA) is a signal peptide. 4 disulfides stabilise this stretch: Cys43-Cys119, Cys76-Cys81, Cys125-Cys326, and Cys202-Cys234. His74 (proton acceptor) is an active-site residue. The Ca(2+) site is built by Asp75, Val78, Gly80, Asp82, and Ser84. Residue Pro165 coordinates substrate. His195 contacts heme b. Thr196 lines the Ca(2+) pocket. Ca(2+) contacts are provided by Asp247, Ser250, and Asp255.

Belongs to the peroxidase family. Classical plant (class III) peroxidase subfamily. Requires heme b as cofactor. It depends on Ca(2+) as a cofactor.

The protein resides in the secreted. It carries out the reaction 2 a phenolic donor + H2O2 = 2 a phenolic radical donor + 2 H2O. In terms of biological role, removal of H(2)O(2), oxidation of toxic reductants, biosynthesis and degradation of lignin, suberization, auxin catabolism, response to environmental stresses such as wounding, pathogen attack and oxidative stress. These functions might be dependent on each isozyme/isoform in each plant tissue. This is Peroxidase 70 (PER70) from Arabidopsis thaliana (Mouse-ear cress).